The following is a 765-amino-acid chain: LPS-assembly protein LptD (765 aa).

An N-terminal signal peptide occupies residues Met1–Ala18.

It belongs to the LptD family. As to quaternary structure, component of the lipopolysaccharide transport and assembly complex. Interacts with LptE and LptA.

The protein localises to the cell outer membrane. Functionally, together with LptE, is involved in the assembly of lipopolysaccharide (LPS) at the surface of the outer membrane. This chain is LPS-assembly protein LptD, found in Shewanella oneidensis (strain ATCC 700550 / JCM 31522 / CIP 106686 / LMG 19005 / NCIMB 14063 / MR-1).